Here is a 600-residue protein sequence, read N- to C-terminus: Glutamine--fructose-6-phosphate aminotransferase [isomerizing] (600 aa).

Residue C2 is the Nucleophile; for GATase activity of the active site. In terms of domain architecture, Glutamine amidotransferase type-2 spans 2–217 (CGIVGYIGNE…DEELVIVRRD (216 aa)). 2 consecutive SIS domains span residues 283 to 422 (IRAA…AAGK) and 452 to 590 (IARD…VDKP). Residue K595 is the For Fru-6P isomerization activity of the active site.

In terms of assembly, homodimer.

The protein localises to the cytoplasm. It carries out the reaction D-fructose 6-phosphate + L-glutamine = D-glucosamine 6-phosphate + L-glutamate. In terms of biological role, catalyzes the first step in hexosamine metabolism, converting fructose-6P into glucosamine-6P using glutamine as a nitrogen source. This is Glutamine--fructose-6-phosphate aminotransferase [isomerizing] from Shouchella clausii (strain KSM-K16) (Alkalihalobacillus clausii).